The chain runs to 225 residues: MLYENMSDSFLLSDAGLEFDEALLEVDQEKDDYLDDFENWTVVPVETIEGINYYPNCLPESVQRNLINNVPKELLSIYGSGKQSHLYIPFPAHINCLNDYIPSDFKQRLWKGQDAEAIIMQVYNPGDGIIPHKDLEMFGDGVAIFSFLSNTTMIFTHPELKLKSKIRLEKGSLLLMSGTARYDWFHEIPFRAGDWVMNDGEEKWVSRSQRLSVTMRRIIENHVFG.

A Fe2OG dioxygenase domain is found at Asp-114–Ile-219.

This sequence belongs to the iron/ascorbate-dependent oxidoreductase family.

The protein localises to the cytoplasm. The protein resides in the nucleus. This is an uncharacterized protein from Schizosaccharomyces pombe (strain 972 / ATCC 24843) (Fission yeast).